A 142-amino-acid polypeptide reads, in one-letter code: uncharacterized protein (142 aa).

Residues 1-26 form the signal peptide; sequence MITEFIKSFLLFFFLPFFLSMPMIFA.

This is an uncharacterized protein from Schizosaccharomyces pombe (strain 972 / ATCC 24843) (Fission yeast).